A 362-amino-acid chain; its full sequence is Flagellar P-ring protein (362 aa).

The first 18 residues, 1 to 18, serve as a signal peptide directing secretion; the sequence is MKHIALIVLYFLSFSVQA.

This sequence belongs to the FlgI family. As to quaternary structure, the basal body constitutes a major portion of the flagellar organelle and consists of four rings (L,P,S, and M) mounted on a central rod.

Its subcellular location is the periplasm. It is found in the bacterial flagellum basal body. In terms of biological role, assembles around the rod to form the L-ring and probably protects the motor/basal body from shearing forces during rotation. This Marinomonas sp. (strain MWYL1) protein is Flagellar P-ring protein.